We begin with the raw amino-acid sequence, 763 residues long: Exo-1,4-beta-xylosidase bxlB (763 aa).

A signal peptide spans 1-23 (MAVFKSWNLALLSSLFIPALCQS). The N-linked (GlcNAc...) asparagine glycan is linked to Asn-63. Asp-288 is an active-site residue. Asn-340, Asn-408, Asn-419, Asn-458, Asn-621, and Asn-760 each carry an N-linked (GlcNAc...) asparagine glycan.

The protein belongs to the glycosyl hydrolase 3 family.

The protein localises to the secreted. The catalysed reaction is Hydrolysis of (1-&gt;4)-beta-D-xylans, to remove successive D-xylose residues from the non-reducing termini.. The protein operates within glycan degradation; xylan degradation. Its function is as follows. Xylan 1,4-beta-xylosidase involved in the hydrolysis of xylan, a major structural heterogeneous polysaccharide found in plant biomass representing the second most abundant polysaccharide in the biosphere, after cellulose. Active against rye arabinoxylan and xylohexaose, but not paranitrophenyl-beta-xyloside. The chain is Exo-1,4-beta-xylosidase bxlB (bxlB) from Emericella nidulans (strain FGSC A4 / ATCC 38163 / CBS 112.46 / NRRL 194 / M139) (Aspergillus nidulans).